Reading from the N-terminus, the 328-residue chain is Beta-ketoacyl-[acyl-carrier-protein] synthase III (328 aa).

Residues cysteine 122 and histidine 255 contribute to the active site. Residues 256 to 260 form an ACP-binding region; sequence QANIR. Asparagine 285 is a catalytic residue.

This sequence belongs to the thiolase-like superfamily. FabH family. In terms of assembly, homodimer.

The protein localises to the cytoplasm. The enzyme catalyses malonyl-[ACP] + acetyl-CoA + H(+) = 3-oxobutanoyl-[ACP] + CO2 + CoA. Its pathway is lipid metabolism; fatty acid biosynthesis. Catalyzes the condensation reaction of fatty acid synthesis by the addition to an acyl acceptor of two carbons from malonyl-ACP. Catalyzes the first condensation reaction which initiates fatty acid synthesis and may therefore play a role in governing the total rate of fatty acid production. Possesses both acetoacetyl-ACP synthase and acetyl transacylase activities. Its substrate specificity determines the biosynthesis of branched-chain and/or straight-chain of fatty acids. The chain is Beta-ketoacyl-[acyl-carrier-protein] synthase III from Herminiimonas arsenicoxydans.